Consider the following 170-residue polypeptide: Lipoprotein signal peptidase (170 aa).

3 helical membrane-spanning segments follow: residues isoleucine 9 to valine 29, leucine 72 to glutamate 92, and threonine 93 to isoleucine 113. Active-site residues include aspartate 124 and aspartate 146. The chain crosses the membrane as a helical span at residues phenylalanine 142–phenylalanine 162.

The protein belongs to the peptidase A8 family.

It localises to the cell inner membrane. The enzyme catalyses Release of signal peptides from bacterial membrane prolipoproteins. Hydrolyzes -Xaa-Yaa-Zaa-|-(S,diacylglyceryl)Cys-, in which Xaa is hydrophobic (preferably Leu), and Yaa (Ala or Ser) and Zaa (Gly or Ala) have small, neutral side chains.. It functions in the pathway protein modification; lipoprotein biosynthesis (signal peptide cleavage). In terms of biological role, this protein specifically catalyzes the removal of signal peptides from prolipoproteins. The protein is Lipoprotein signal peptidase of Borrelia hermsii (strain HS1 / DAH).